Consider the following 478-residue polypeptide: Glycogen synthase (478 aa).

Position 20 (Lys-20) interacts with ADP-alpha-D-glucose.

This sequence belongs to the glycosyltransferase 1 family. Bacterial/plant glycogen synthase subfamily.

It carries out the reaction [(1-&gt;4)-alpha-D-glucosyl](n) + ADP-alpha-D-glucose = [(1-&gt;4)-alpha-D-glucosyl](n+1) + ADP + H(+). It participates in glycan biosynthesis; glycogen biosynthesis. Its function is as follows. Synthesizes alpha-1,4-glucan chains using ADP-glucose. In Cereibacter sphaeroides (strain ATCC 17023 / DSM 158 / JCM 6121 / CCUG 31486 / LMG 2827 / NBRC 12203 / NCIMB 8253 / ATH 2.4.1.) (Rhodobacter sphaeroides), this protein is Glycogen synthase.